Consider the following 87-residue polypeptide: Acyl-CoA-binding protein (87 aa).

An ACB domain is found at 2–87 (VSQLFEEKAK…VDQLIAKYSS (86 aa)). An acyl-CoA contacts are provided by residues 29-33 (YALYK), Lys-51, and Lys-55. Residue Lys-51 forms a Glycyl lysine isopeptide (Lys-Gly) (interchain with G-Cter in ubiquitin) linkage. Lys-72 is covalently cross-linked (Glycyl lysine isopeptide (Lys-Gly) (interchain with G-Cter in ubiquitin)). An an acyl-CoA-binding site is contributed by Tyr-74.

The protein belongs to the ACBP family.

Its function is as follows. Binds medium- and long-chain acyl-CoA esters with very high affinity and may function as an intracellular carrier of acyl-CoA esters. Enhances the in vitro activity of the ceramide synthase complex. This is Acyl-CoA-binding protein (ACB1) from Saccharomyces cerevisiae (strain ATCC 204508 / S288c) (Baker's yeast).